The following is a 525-amino-acid chain: Glutamate synthase large subunit-like protein YerD (525 aa).

A helical membrane pass occupies residues 4-24 (IIIALIAFIIGIIAIPIVLFA).

Belongs to the glutamate synthase family.

Its subcellular location is the cell membrane. The protein is Glutamate synthase large subunit-like protein YerD (yerD) of Bacillus subtilis (strain 168).